We begin with the raw amino-acid sequence, 216 residues long: MAAGPRTSVLLAFALLCLPWTQEVGAFPAMPLSSLFANAVLRAQHLHQLAADTYKEFERAYIPEGQRYSIQNTQAAFCFSETIPAPTGKDEAQQRSDVELLRFSLLLIQSWLGPVQFLSRVFTNSLVFGTSDRVYEKLKDLEEGIQALMRELEDGSPRAGQILKQTYDKFDTNMRSDDALLKNYGLLSCFKKDLHKAETYLRVMKCRRFVESSCAF.

An N-terminal signal peptide occupies residues 1-26 (MAAGPRTSVLLAFALLCLPWTQEVGA). H45 lines the Zn(2+) pocket. C78 and C189 are disulfide-bonded. Residue S131 is modified to Phosphoserine. A Zn(2+)-binding site is contributed by E198. Residues C206 and C214 are joined by a disulfide bond.

Belongs to the somatotropin/prolactin family.

It is found in the secreted. In terms of biological role, plays an important role in growth control. Its major role in stimulating body growth is to stimulate the liver and other tissues to secrete IGF1. It stimulates both the differentiation and proliferation of myoblasts. It also stimulates amino acid uptake and protein synthesis in muscle and other tissues. The chain is Somatotropin (GH1) from Hippopotamus amphibius (Hippopotamus).